The chain runs to 116 residues: Large ribosomal subunit protein bL19 (116 aa).

It belongs to the bacterial ribosomal protein bL19 family.

Its function is as follows. This protein is located at the 30S-50S ribosomal subunit interface and may play a role in the structure and function of the aminoacyl-tRNA binding site. This is Large ribosomal subunit protein bL19 from Actinobacillus succinogenes (strain ATCC 55618 / DSM 22257 / CCUG 43843 / 130Z).